Consider the following 1391-residue polypeptide: DNA-directed RNA polymerase subunit beta' (1391 aa).

Positions 72, 74, 87, and 90 each coordinate Zn(2+). Mg(2+) is bound by residues aspartate 462, aspartate 464, and aspartate 466. The Zn(2+) site is built by cysteine 816, cysteine 890, cysteine 897, and cysteine 900.

This sequence belongs to the RNA polymerase beta' chain family. In terms of assembly, the RNAP catalytic core consists of 2 alpha, 1 beta, 1 beta' and 1 omega subunit. When a sigma factor is associated with the core the holoenzyme is formed, which can initiate transcription. The cofactor is Mg(2+). Zn(2+) serves as cofactor.

It carries out the reaction RNA(n) + a ribonucleoside 5'-triphosphate = RNA(n+1) + diphosphate. DNA-dependent RNA polymerase catalyzes the transcription of DNA into RNA using the four ribonucleoside triphosphates as substrates. In Neisseria meningitidis serogroup B (strain ATCC BAA-335 / MC58), this protein is DNA-directed RNA polymerase subunit beta'.